A 259-amino-acid chain; its full sequence is Heat-labile enterotoxin IIA, A chain (259 aa).

Residues 1-18 form the signal peptide; sequence MIKHVLLFFVFISFSVSA. NAD(+) is bound at residue 23 to 37; it reads RADSRTPDEIRRAGG. Glu-128 is an active-site residue. Residues Cys-203 and Cys-215 are joined by a disulfide bond.

This sequence belongs to the enterotoxin A family. As to quaternary structure, heterohexamer of one A chain and of five B chains.

In terms of biological role, the biological activity of the toxin is produced by the A chain, which activates intracellular adenyl cyclase. In Escherichia coli, this protein is Heat-labile enterotoxin IIA, A chain.